We begin with the raw amino-acid sequence, 264 residues long: MSKVTSSTLLKYKQEGRKFTALTAYDASFASAFDGEGIDVLLVGDSLGMVLQGHDDTLPVTTAEIAYHTRCVRRGIERSLLIADMPFMSYATPEQAMENATALMQAGANMVKLEGGHWLLETVTKLTERGIPVCAHLGLTPQSVHVFGGFKVQGRDAENAQRILDEAKALEAAGAQLLVVECIPASLATAITQALTIPVIGIGAGATTDGQILVMHDVLGISSGYIPRFSKNYLKQTGEIRSAVRAYIEEVANGSFPSADHTFN.

Mg(2+) is bound by residues D45 and D84. 3-methyl-2-oxobutanoate contacts are provided by residues 45–46 (DS), D84, and K112. A Mg(2+)-binding site is contributed by E114. E181 (proton acceptor) is an active-site residue.

The protein belongs to the PanB family. Homodecamer; pentamer of dimers. It depends on Mg(2+) as a cofactor.

The protein localises to the cytoplasm. It catalyses the reaction 3-methyl-2-oxobutanoate + (6R)-5,10-methylene-5,6,7,8-tetrahydrofolate + H2O = 2-dehydropantoate + (6S)-5,6,7,8-tetrahydrofolate. The protein operates within cofactor biosynthesis; (R)-pantothenate biosynthesis; (R)-pantoate from 3-methyl-2-oxobutanoate: step 1/2. Its function is as follows. Catalyzes the reversible reaction in which hydroxymethyl group from 5,10-methylenetetrahydrofolate is transferred onto alpha-ketoisovalerate to form ketopantoate. The sequence is that of 3-methyl-2-oxobutanoate hydroxymethyltransferase from Shewanella sp. (strain ANA-3).